The chain runs to 48 residues: Large ribosomal subunit protein bL32 (48 aa).

Positions 1 to 20 (MAVPDRRVSKTRAAKRRTHY) are disordered. Positions 9–20 (SKTRAAKRRTHY) are enriched in basic residues.

Belongs to the bacterial ribosomal protein bL32 family.

In Helicobacter acinonychis (strain Sheeba), this protein is Large ribosomal subunit protein bL32.